Reading from the N-terminus, the 347-residue chain is tRNA N6-adenosine threonylcarbamoyltransferase (347 aa).

The Fe cation site is built by histidine 111 and histidine 115. Residues 133 to 137, aspartate 166, glycine 179, and asparagine 278 each bind substrate; that span reads LASGG. Aspartate 306 is a Fe cation binding site.

Belongs to the KAE1 / TsaD family. Fe(2+) serves as cofactor.

The protein resides in the cytoplasm. It carries out the reaction L-threonylcarbamoyladenylate + adenosine(37) in tRNA = N(6)-L-threonylcarbamoyladenosine(37) in tRNA + AMP + H(+). Its function is as follows. Required for the formation of a threonylcarbamoyl group on adenosine at position 37 (t(6)A37) in tRNAs that read codons beginning with adenine. Is involved in the transfer of the threonylcarbamoyl moiety of threonylcarbamoyl-AMP (TC-AMP) to the N6 group of A37, together with TsaE and TsaB. TsaD likely plays a direct catalytic role in this reaction. The sequence is that of tRNA N6-adenosine threonylcarbamoyltransferase from Paramagnetospirillum magneticum (strain ATCC 700264 / AMB-1) (Magnetospirillum magneticum).